Here is a 128-residue protein sequence, read N- to C-terminus: Large ribosomal subunit protein bL20c (128 aa).

Belongs to the bacterial ribosomal protein bL20 family. Component of the chloroplast large ribosomal subunit (LSU). Mature 70S chloroplast ribosomes of higher plants consist of a small (30S) and a large (50S) subunit. The 30S small subunit contains 1 molecule of ribosomal RNA (16S rRNA) and 24 different proteins. The 50S large subunit contains 3 rRNA molecules (23S, 5S and 4.5S rRNA) and 33 different proteins.

It is found in the plastid. It localises to the chloroplast. Functionally, component of the chloroplast ribosome (chloro-ribosome), a dedicated translation machinery responsible for the synthesis of chloroplast genome-encoded proteins, including proteins of the transcription and translation machinery and components of the photosynthetic apparatus. The chain is Large ribosomal subunit protein bL20c (rpl20) from Spinacia oleracea (Spinach).